The primary structure comprises 253 residues: 2,3-bisphosphoglycerate-dependent phosphoglycerate mutase (253 aa).

Residues R12–N19, T25–G26, R64, E91–Y94, K102, and R118–R119 each bind substrate. The Tele-phosphohistidine intermediate role is filled by H13. Residue E91 is the Proton donor/acceptor of the active site. The tract at residues P126–E148 is disordered. G187 to N188 contacts substrate.

The protein belongs to the phosphoglycerate mutase family. BPG-dependent PGAM subfamily.

The enzyme catalyses (2R)-2-phosphoglycerate = (2R)-3-phosphoglycerate. It participates in carbohydrate degradation; glycolysis; pyruvate from D-glyceraldehyde 3-phosphate: step 3/5. Its function is as follows. Catalyzes the interconversion of 2-phosphoglycerate and 3-phosphoglycerate. In Streptomyces avermitilis (strain ATCC 31267 / DSM 46492 / JCM 5070 / NBRC 14893 / NCIMB 12804 / NRRL 8165 / MA-4680), this protein is 2,3-bisphosphoglycerate-dependent phosphoglycerate mutase.